The following is a 343-amino-acid chain: Heat-inducible transcription repressor HrcA (343 aa).

The protein belongs to the HrcA family.

Its function is as follows. Negative regulator of class I heat shock genes (grpE-dnaK-dnaJ and groELS operons). Prevents heat-shock induction of these operons. In Halalkalibacterium halodurans (strain ATCC BAA-125 / DSM 18197 / FERM 7344 / JCM 9153 / C-125) (Bacillus halodurans), this protein is Heat-inducible transcription repressor HrcA.